Consider the following 352-residue polypeptide: DNA primase (352 aa).

Disordered stretches follow at residues 145–172 (DPKL…REDG) and 318–352 (YRQQ…GMSL). The segment covering 318-332 (YRQQWEKLEGREPVR) has biased composition (basic and acidic residues).

Its function is as follows. Functions as a primase with respect to replication at the (vegetative) origin of replication of pTF-FC2. The protein is DNA primase (repB) of Acidithiobacillus ferrooxidans (Thiobacillus ferrooxidans).